Consider the following 143-residue polypeptide: Large ribosomal subunit protein uL11 (143 aa).

The protein belongs to the universal ribosomal protein uL11 family. In terms of assembly, part of the ribosomal stalk of the 50S ribosomal subunit. Interacts with L10 and the large rRNA to form the base of the stalk. L10 forms an elongated spine to which L12 dimers bind in a sequential fashion forming a multimeric L10(L12)X complex. In terms of processing, one or more lysine residues are methylated.

Functionally, forms part of the ribosomal stalk which helps the ribosome interact with GTP-bound translation factors. The sequence is that of Large ribosomal subunit protein uL11 from Leifsonia xyli subsp. xyli (strain CTCB07).